The primary structure comprises 517 residues: MLRPRRSLGVSSPAKQRKKAAPKNSMATRANRKRLPSYLKPGSAVEISSDEIGFRGSWYMGKVITIPSSSDKDSVKCQVEYTTLFFDKEGTKPLKEVVDMSQLRPPAPPMSEIEKKKKIVVGEEVDAFYNDGWWEGDVTEVLDDGKFSVFFRSSKEQIRFRKDELRFHREWVDGAWKPPLEETEEEEDESEEDKLDDSEDEEDILARVDLETTRAIAKQMFSSGTVVEVSSDEEGFQGCWFAAKVVEPVGEDKFLVEYRDLREKDGIEPLKEETDFLHIRPPPPRDEDIDFAVGDKINAFYNDGWWVGVVIDGMKHGTVGIYFRQSQEKMRFGRQGLRLHKDWVDGTWQLPLKGGKIKREKTVSCNRNVRPKKATEKQAFSIGTPIEVSPEEEGFEDSWFLAKLIEYRGKDKCLVEYDNLKAEDGKEPLREEVNVSRIRPLPLESVMVSPFERHDKVNALYNDGWWVGVIRKVLAKSSYLVLFKNTQELLKFHHSQLRLHQEWIDGKWITSFKSQKV.

A disordered region spans residues 1 to 35; the sequence is MLRPRRSLGVSSPAKQRKKAAPKNSMATRANRKRL. Plant Agenet, chromatin-binding regions lie at residues 37 to 111 and 117 to 173; these read SYLK…PPMS and KKIV…EWVD. The tract at residues 177–202 is disordered; sequence KPPLEETEEEEDESEEDKLDDSEDEE. The segment covering 181–202 has biased composition (acidic residues); the sequence is EETEEEEDESEEDKLDDSEDEE. 4 plant Agenet, chromatin-binding regions span residues 219–287, 289–345, 378–446, and 449–505; these read QMFS…PRDE, IDFA…DWVD, QAFS…LESV, and SPFE…EWID.

In terms of tissue distribution, expressed ubiquitously during vegetative stage, in meristems (e.g. root tips and shoot apical meristem), and in ovules and young seeds during reproductive stage.

It localises to the nucleus. Heterochromatin-binding protein that preferentially occupies long transposons and specifically recognizes the histone H3 'Lys-9' methylation (H3K9me) marks, with a stronger affinity for dimethylated H3K9 (H3K9me2). Required for transcriptional silencing, non-CG DNA methylation (e.g. CHG and CHH regions), and H3K9 dimethylation (H3K9me2) at some loci. Mediates heterochromatin phase separation and chromocenter formation. This is Protein AGENET DOMAIN (AGD)-CONTAINING P1 from Arabidopsis thaliana (Mouse-ear cress).